Consider the following 429-residue polypeptide: 46 kDa membrane protein (429 aa).

Transmembrane regions (helical) follow at residues 26–46, 51–71, 99–119, 173–193, 224–244, 279–299, 315–335, 360–380, and 407–427; these read AALT…EDVF, TGID…VSVL, LVLV…VLLI, FLIH…ALLP, LLIK…AHPV, TLLF…TDVV, LLTV…IDNI, ILWW…AVGA, and IAVT…RYLV.

The protein belongs to the CitM (TC 2.A.11) transporter family.

It localises to the cell membrane. In Mycobacterium leprae (strain TN), this protein is 46 kDa membrane protein (ag45).